Here is a 437-residue protein sequence, read N- to C-terminus: GTPase Era, mitochondrial (437 aa).

The N-terminal 43 residues, 1 to 43 (MAAPSWRGARLVQSVLRVWQVGPHVARERVIPFSSLLGFQRRC), are a transit peptide targeting the mitochondrion. Positions 112–330 (RVLRVVLLGA…QYLLTQAQPG (219 aa)) constitute an Era-type G domain. A G1 region spans residues 120-127 (GAPNAGKS). 120 to 127 (GAPNAGKS) contacts GTP. The segment at 146–150 (HTTRC) is G2. Residues 167–170 (DTPG) are G3. 167 to 171 (DTPGI) provides a ligand contact to GTP. Serine 173 is modified (phosphoserine). 236-239 (NKVD) lines the GTP pocket. The segment at 236–239 (NKVD) is G4. The interval 271-290 (HSHPGTHCPSPAVKDPNTQS) is disordered. The G5 stretch occupies residues 308–310 (LSA). One can recognise a KH type-2 domain in the interval 360–437 (LPQEVPYNVQ…DIRLSVKLLK (78 aa)).

The protein belongs to the TRAFAC class TrmE-Era-EngA-EngB-Septin-like GTPase superfamily. Era GTPase family.

The protein localises to the mitochondrion matrix. It localises to the mitochondrion inner membrane. Functionally, probable GTPase that plays a role in the mitochondrial ribosomal small subunit assembly. Specifically binds the 12S mitochondrial rRNA (12S mt-rRNA) to a 33 nucleotide section delineating the 3' terminal stem-loop region. May act as a chaperone that protects the 12S mt-rRNA on the 28S mitoribosomal subunit during ribosomal small subunit assembly. The chain is GTPase Era, mitochondrial (ERAL1) from Homo sapiens (Human).